The primary structure comprises 211 residues: Large ribosomal subunit protein uL3 (211 aa).

An N5-methylglutamine modification is found at Gln-150.

It belongs to the universal ribosomal protein uL3 family. In terms of assembly, part of the 50S ribosomal subunit. Forms a cluster with proteins L14 and L19. Post-translationally, methylated by PrmB.

One of the primary rRNA binding proteins, it binds directly near the 3'-end of the 23S rRNA, where it nucleates assembly of the 50S subunit. The protein is Large ribosomal subunit protein uL3 of Pseudomonas syringae pv. tomato (strain ATCC BAA-871 / DC3000).